The chain runs to 216 residues: Probable GTP-binding protein EngB (216 aa).

The EngB-type G domain maps to 21 to 192 (DAPQIALAGR…WRELRALAAG (172 aa)). Residues 29-36 (GRSNVGKS), 56-60 (GKTRS), 75-78 (DLPG), 142-145 (TKGD), and 170-173 (VTAS) contribute to the GTP site. Residues Ser-36 and Thr-58 each contribute to the Mg(2+) site. The tract at residues 195 to 216 (SADDEAEDAPSDTIDAIDDVTA) is disordered. The segment covering 196-216 (ADDEAEDAPSDTIDAIDDVTA) has biased composition (acidic residues).

It belongs to the TRAFAC class TrmE-Era-EngA-EngB-Septin-like GTPase superfamily. EngB GTPase family. The cofactor is Mg(2+).

Necessary for normal cell division and for the maintenance of normal septation. This is Probable GTP-binding protein EngB from Nitratidesulfovibrio vulgaris (strain DP4) (Desulfovibrio vulgaris).